A 152-amino-acid chain; its full sequence is Transcriptional regulator MraZ (152 aa).

SpoVT-AbrB domains lie at 5 to 52 (ATLV…PLPE) and 81 to 124 (ASEC…DETT).

This sequence belongs to the MraZ family. As to quaternary structure, forms oligomers.

It is found in the cytoplasm. The protein localises to the nucleoid. Functionally, negatively regulates its own expression and that of the subsequent genes in the proximal part of the division and cell wall (dcw) gene cluster. Acts by binding directly to DNA. May also regulate the expression of genes outside the dcw cluster. The chain is Transcriptional regulator MraZ from Salmonella typhi.